A 253-amino-acid chain; its full sequence is E3 ubiquitin-protein ligase MARCHF3 (253 aa).

Residues 63–123 form an RING-CH-type zinc finger; the sequence is SPFNDRPMCR…ELCHFRFAVE (61 aa). Residues C71, C74, C87, C89, H97, C100, C113, and C116 each contribute to the Zn(2+) site. The next 2 membrane-spanning stretches (helical) occupy residues 145–165 and 182–202; these read LFGDMVCFLFITPLATISGWL and AVGLIALTVALFTIYLFWTLV. 2 positions are modified to phosphoserine: S237 and S243.

In terms of assembly, interacts with MARCHF2 and STX6. In terms of tissue distribution, expressed predominantly in lung, colon and spleen. Present in liver (at protein level).

It is found in the cytoplasmic vesicle membrane. The protein resides in the early endosome membrane. The enzyme catalyses S-ubiquitinyl-[E2 ubiquitin-conjugating enzyme]-L-cysteine + [acceptor protein]-L-lysine = [E2 ubiquitin-conjugating enzyme]-L-cysteine + N(6)-ubiquitinyl-[acceptor protein]-L-lysine.. The protein operates within protein modification; protein ubiquitination. E3 ubiquitin-protein ligase which may be involved in endosomal trafficking. E3 ubiquitin ligases accept ubiquitin from an E2 ubiquitin-conjugating enzyme in the form of a thioester and then directly transfer the ubiquitin to targeted substrates. In Rattus norvegicus (Rat), this protein is E3 ubiquitin-protein ligase MARCHF3 (Marchf3).